The primary structure comprises 957 residues: Glycine dehydrogenase (decarboxylating) (957 aa).

N6-(pyridoxal phosphate)lysine is present on lysine 708.

This sequence belongs to the GcvP family. As to quaternary structure, the glycine cleavage system is composed of four proteins: P, T, L and H. Pyridoxal 5'-phosphate serves as cofactor.

It carries out the reaction N(6)-[(R)-lipoyl]-L-lysyl-[glycine-cleavage complex H protein] + glycine + H(+) = N(6)-[(R)-S(8)-aminomethyldihydrolipoyl]-L-lysyl-[glycine-cleavage complex H protein] + CO2. Functionally, the glycine cleavage system catalyzes the degradation of glycine. The P protein binds the alpha-amino group of glycine through its pyridoxal phosphate cofactor; CO(2) is released and the remaining methylamine moiety is then transferred to the lipoamide cofactor of the H protein. This is Glycine dehydrogenase (decarboxylating) from Escherichia coli (strain ATCC 8739 / DSM 1576 / NBRC 3972 / NCIMB 8545 / WDCM 00012 / Crooks).